Here is a 334-residue protein sequence, read N- to C-terminus: Ornithine carbamoyltransferase, catabolic (334 aa).

Carbamoyl phosphate contacts are provided by residues serine 57–threonine 60, glutamine 84, arginine 108, and histidine 135–glutamine 138. Residues asparagine 168, aspartate 232, and serine 236–methionine 237 contribute to the L-ornithine site. Carbamoyl phosphate contacts are provided by residues cysteine 274–leucine 275 and arginine 321.

Belongs to the aspartate/ornithine carbamoyltransferase superfamily. OTCase family.

It localises to the cytoplasm. It carries out the reaction carbamoyl phosphate + L-ornithine = L-citrulline + phosphate + H(+). Its pathway is amino-acid degradation; L-arginine degradation via ADI pathway; carbamoyl phosphate from L-arginine: step 2/2. Its function is as follows. Reversibly catalyzes the transfer of the carbamoyl group from carbamoyl phosphate (CP) to the N(epsilon) atom of ornithine (ORN) to produce L-citrulline. The protein is Ornithine carbamoyltransferase, catabolic (arcB) of Haemophilus influenzae (strain ATCC 51907 / DSM 11121 / KW20 / Rd).